The primary structure comprises 186 residues: Mating-type-like protein ALPHA2 (186 aa).

The homeobox; TALE-type DNA-binding region spans 108–170 (ASYRGHRFTR…NRRRKQKSIY (63 aa)).

Belongs to the TALE/M-ATYP homeobox family.

Its subcellular location is the nucleus. Functionally, mating type proteins are sequence specific DNA-binding proteins that act as master switches in yeast differentiation by controlling gene expression in a cell type-specific fashion. This chain is Mating-type-like protein ALPHA2 (MTL1ALPHA2), found in Candida glabrata (strain ATCC 2001 / BCRC 20586 / JCM 3761 / NBRC 0622 / NRRL Y-65 / CBS 138) (Yeast).